Consider the following 297-residue polypeptide: N-acetylmuramic acid 6-phosphate etherase (297 aa).

One can recognise an SIS domain in the interval 55 to 218 (AAAALKSGGR…STGAMVKFGK (164 aa)). Glutamate 83 functions as the Proton donor in the catalytic mechanism. The active site involves glutamate 114.

It belongs to the GCKR-like family. MurNAc-6-P etherase subfamily. As to quaternary structure, homodimer.

The enzyme catalyses N-acetyl-D-muramate 6-phosphate + H2O = N-acetyl-D-glucosamine 6-phosphate + (R)-lactate. It functions in the pathway amino-sugar metabolism; 1,6-anhydro-N-acetylmuramate degradation. The protein operates within amino-sugar metabolism; N-acetylmuramate degradation. It participates in cell wall biogenesis; peptidoglycan recycling. Functionally, specifically catalyzes the cleavage of the D-lactyl ether substituent of MurNAc 6-phosphate, producing GlcNAc 6-phosphate and D-lactate. Together with AnmK, is also required for the utilization of anhydro-N-acetylmuramic acid (anhMurNAc) either imported from the medium or derived from its own cell wall murein, and thus plays a role in cell wall recycling. This Salmonella schwarzengrund (strain CVM19633) protein is N-acetylmuramic acid 6-phosphate etherase.